The primary structure comprises 428 residues: Adenylosuccinate synthetase (428 aa).

GTP contacts are provided by residues 12–18 (GDEGKGK) and 40–42 (GHT). The active-site Proton acceptor is Asp-13. Mg(2+)-binding residues include Asp-13 and Gly-40. IMP is bound by residues 13-16 (DEGK), 38-41 (NAGH), Thr-128, Arg-142, Gln-223, Thr-238, and Arg-302. His-41 serves as the catalytic Proton donor. Residue 298–304 (VTTGRPR) participates in substrate binding. Residues Arg-304, 330–332 (KLD), and 412–414 (GVG) contribute to the GTP site.

The protein belongs to the adenylosuccinate synthetase family. As to quaternary structure, homodimer. The cofactor is Mg(2+).

It is found in the cytoplasm. The enzyme catalyses IMP + L-aspartate + GTP = N(6)-(1,2-dicarboxyethyl)-AMP + GDP + phosphate + 2 H(+). It functions in the pathway purine metabolism; AMP biosynthesis via de novo pathway; AMP from IMP: step 1/2. Plays an important role in the de novo pathway of purine nucleotide biosynthesis. Catalyzes the first committed step in the biosynthesis of AMP from IMP. This chain is Adenylosuccinate synthetase, found in Halothermothrix orenii (strain H 168 / OCM 544 / DSM 9562).